Consider the following 349-residue polypeptide: Nicotinate-nucleotide--dimethylbenzimidazole phosphoribosyltransferase (349 aa).

The disordered stretch occupies residues 1-20; sequence MEFATVSPPDPGTAAAARAR. The active-site Proton acceptor is Glu-313.

The protein belongs to the CobT family.

It carries out the reaction 5,6-dimethylbenzimidazole + nicotinate beta-D-ribonucleotide = alpha-ribazole 5'-phosphate + nicotinate + H(+). It participates in nucleoside biosynthesis; alpha-ribazole biosynthesis; alpha-ribazole from 5,6-dimethylbenzimidazole: step 1/2. In terms of biological role, catalyzes the synthesis of alpha-ribazole-5'-phosphate from nicotinate mononucleotide (NAMN) and 5,6-dimethylbenzimidazole (DMB). The chain is Nicotinate-nucleotide--dimethylbenzimidazole phosphoribosyltransferase from Mycolicibacterium paratuberculosis (strain ATCC BAA-968 / K-10) (Mycobacterium paratuberculosis).